The chain runs to 456 residues: Peptide chain release factor PrfB1, chloroplastic (456 aa).

The transit peptide at 1-58 (MSMELTVLGPLAGRSFAIAGKPKLLLLRPTNLPLLRLSLPLSLPNFSSSSRFNSPIVF) directs the protein to the chloroplast.

Belongs to the prokaryotic/mitochondrial release factor family. In terms of tissue distribution, expressed in leaves, stems and flowers.

Its subcellular location is the plastid. The protein localises to the chloroplast stroma. Directs the termination of translation in response to the peptide chain termination codon UGA. Required for the proper translation, stability and normal processing of UGA-containing polycistronic transcripts in chloroplasts. This is Peptide chain release factor PrfB1, chloroplastic from Arabidopsis thaliana (Mouse-ear cress).